A 331-amino-acid chain; its full sequence is Serine/threonine-protein phosphatase 6 catalytic subunit (331 aa).

4 residues coordinate Mn(2+): aspartate 79, histidine 81, aspartate 107, and asparagine 139. Histidine 140 serves as the catalytic Proton donor. 2 residues coordinate Mn(2+): histidine 189 and histidine 264.

Belongs to the PPP phosphatase family. PP-6 (PP-V) subfamily. Forms a complex composed of catalytic subunit pph-6 and regulatory subunit saps-1; the interaction increases pph-6 and saps-1 protein stability. The cofactor is Mn(2+).

It localises to the cytoplasm. The protein localises to the cell cortex. Its subcellular location is the cytoskeleton. The protein resides in the spindle pole. The enzyme catalyses O-phospho-L-seryl-[protein] + H2O = L-seryl-[protein] + phosphate. It carries out the reaction O-phospho-L-threonyl-[protein] + H2O = L-threonyl-[protein] + phosphate. Its function is as follows. Catalytic subunit of protein phosphatase 6 (PP6). In complex with saps-1, promotes actomyosin contractility during cytokinesis by regulating the organization of cortical non-muscle myosin II nmy-2 and thus contributing to correct spindle positioning. Also required for the proper generation of pulling forces on spindle poles during anaphase by regulating the cortical localization of gpr-1, gpr-2 and lin-5. This Caenorhabditis elegans protein is Serine/threonine-protein phosphatase 6 catalytic subunit.